The primary structure comprises 121 residues: Small ribosomal subunit protein bS6 (121 aa).

Belongs to the bacterial ribosomal protein bS6 family.

Functionally, binds together with bS18 to 16S ribosomal RNA. The protein is Small ribosomal subunit protein bS6 of Rickettsia peacockii (strain Rustic).